The chain runs to 737 residues: Fibronectin type III domain-containing protein 7 (737 aa).

The N-terminal stretch at 1–25 is a signal peptide; it reads MAGRPEKCFSLIRFTLLCLKMVISS. Fibronectin type-III domains are found at residues 28–115, 116–203, 204–288, 289–373, 374–459, 460–544, 545–633, and 631–715; these read APEI…TVLA, APVL…SPRA, PANI…TVAC, APGR…TAPC, CPND…TAPC, SPEI…TVPC, CPAG…CPLG, and PLGV…YSVT. Asparagine 230 is a glycosylation site (N-linked (GlcNAc...) asparagine). Residue asparagine 433 is glycosylated (N-linked (GlcNAc...) asparagine).

Its subcellular location is the secreted. This is Fibronectin type III domain-containing protein 7 (Fndc7) from Mus musculus (Mouse).